The chain runs to 144 residues: Large ribosomal subunit protein uL15 (144 aa).

Residues Met-1–Gln-54 are disordered. The span at Arg-21 to Ala-31 shows a compositional bias: gly residues.

The protein belongs to the universal ribosomal protein uL15 family. In terms of assembly, part of the 50S ribosomal subunit.

Its function is as follows. Binds to the 23S rRNA. The chain is Large ribosomal subunit protein uL15 from Saccharophagus degradans (strain 2-40 / ATCC 43961 / DSM 17024).